Here is a 510-residue protein sequence, read N- to C-terminus: GMP synthase [glutamine-hydrolyzing] (510 aa).

Residues 5–195 (LVLVIDFGGQ…LFKICGLKED (191 aa)) form the Glutamine amidotransferase type-1 domain. Residue cysteine 82 is the Nucleophile of the active site. Active-site residues include histidine 169 and glutamate 171. The GMPS ATP-PPase domain occupies 196 to 385 (WSMSSFAKEK…LGIPHKLVWR (190 aa)). 223-229 (SGGVDSS) is a binding site for ATP.

Homodimer.

The catalysed reaction is XMP + L-glutamine + ATP + H2O = GMP + L-glutamate + AMP + diphosphate + 2 H(+). It participates in purine metabolism; GMP biosynthesis; GMP from XMP (L-Gln route): step 1/1. Functionally, catalyzes the synthesis of GMP from XMP. This Clostridium acetobutylicum (strain ATCC 824 / DSM 792 / JCM 1419 / IAM 19013 / LMG 5710 / NBRC 13948 / NRRL B-527 / VKM B-1787 / 2291 / W) protein is GMP synthase [glutamine-hydrolyzing].